Consider the following 647-residue polypeptide: MTLFHHVVDRGAKKRGRNGEQRLFPLSSLLDGYECARRDEHISYGASAAAVPPFGCTFSSAHGQQNCLAVANEEGFVTIFNTGEKQSSVLKEWQAHDNAVFDIAWVPGTNCLVTASGDQTARLWDVITGDLLGTFKGHQCSLKSVAFYKQEKAVFSTGGRDGNIMIWDTRCSKKDGFYRQVKQISGAHMKPERFTPQTKKRRGMAPPVDSQQGVTVVLFCDETKLISSGAVDGIIKMWDLRRNYTAYHQNPLPLQAYPYPGSCTRKLGYSGLSLDYTGSRLFSNCTDDNIYMFNISGLKTTPVAVFSGHSNSSFYVKSTVSPDDQFLASGSSDHNVYIWKISDPKQAPMMLQGHSQEVTSVAWCPTDFTKIASCSDDNTVRIWRLNRKPEGENSTIQDGNLVGWTIRKVQSPNRTPGHHSPVELTPSKNPGSVRSVSLASPQPATCAPTGAALPLPSNTSSAPPAKLTSPKMPSSLQQWISRSSKSPVRKALTPVLQGLSFEHRVKRRLETGDSASSGLGEEIDGVSELYPNVKRSRSSVSTLKKEDSFGLESEKRLGSDGAEASGKENSSPRRTDWLSVISQKFKGSAQPKSPSSGSSQQDTRTLESPAAVSPRPMKVFSPPTNKKASPSKPMKKISSYFMKRTQD.

WD repeat units lie at residues 48 to 88, 95 to 134, 137 to 177, 209 to 248, 264 to 303, 308 to 349, and 353 to 393; these read AAAV…KQSS, AHDN…LLGT, GHQC…KDGF, DSQQ…TAYH, TRKL…TTPV, GHSN…QAPM, and GHSQ…EGEN. 2 short sequence motifs (DDB1-binding motif) span residues 167 to 170 and 238 to 241; these read WDTR and WDLR. Disordered stretches follow at residues 410-487 and 534-647; these read QSPN…SKSP and KRSR…RTQD. Polar residues-rich tracts occupy residues 426 to 443 and 471 to 486; these read PSKN…SPQP and KMPS…SSKS. Over residues 543-558 the composition is skewed to basic and acidic residues; sequence LKKEDSFGLESEKRLG. Low complexity predominate over residues 586–600; the sequence is KGSAQPKSPSSGSSQ.

It belongs to the WD repeat cdt2 family. As to quaternary structure, component of the DCX(DTL) E3 ubiquitin ligase complex, at least composed of cul4 (cul4a or cul4b), ddb1, dtl/cdt2 and rbx1.

It is found in the nucleus. Its subcellular location is the cytoplasm. The protein resides in the cytoskeleton. The protein localises to the microtubule organizing center. It localises to the centrosome. It is found in the chromosome. Its pathway is protein modification; protein ubiquitination. In terms of biological role, substrate-specific adapter of a DCX (DDB1-CUL4-X-box) E3 ubiquitin-protein ligase complex required for cell cycle control, DNA damage response and translesion DNA synthesis. The DCX(DTL) complex, also named CRL4(CDT2) complex, mediates the polyubiquitination and subsequent degradation of CDT1, CDKN1A/p21(CIP1), KMT5A and SDE2. CDT1 degradation in response to DNA damage is necessary to ensure proper cell cycle regulation of DNA replication. CDKN1A/p21(CIP1) degradation during S phase or following UV irradiation is essential to control replication licensing. KMT5A degradation is also important for a proper regulation of mechanisms such as TGF-beta signaling, cell cycle progression, DNA repair and cell migration. Most substrates require their interaction with PCNA for their polyubiquitination: substrates interact with PCNA via their PIP-box, and those containing the 'K+4' motif in the PIP box, recruit the DCX(DTL) complex, leading to their degradation. In undamaged proliferating cells, the DCX(DTL) complex also promotes the 'Lys-164' monoubiquitination of PCNA, thereby being involved in PCNA-dependent translesion DNA synthesis. May play a role in the regulation of the circadian clock. In Danio rerio (Zebrafish), this protein is Denticleless protein homolog (dtl).